Here is a 420-residue protein sequence, read N- to C-terminus: Serine protease inhibitor A3B (420 aa).

The signal sequence occupies residues 1–17 (MAFIAALGLLMAEICPA). N-linked (GlcNAc...) asparagine glycosylation is found at Asn104 and Asn349. The RCL stretch occupies residues 367-392 (GTEGDAITIVGYNFMSAKLKPVFVKF).

Belongs to the serpin family.

The protein resides in the secreted. The polypeptide is Serine protease inhibitor A3B (Serpina3b) (Mus musculus (Mouse)).